The chain runs to 173 residues: Alpha-crystallin A chain (173 aa).

M1 is modified (N-acetylmethionine). The interval 1–63 is required for complex formation with BFSP1 and BFSP2; that stretch reads MDVTIQHPWF…RTVLDSGISE (63 aa). Q6 is modified (deamidated glutamine; partial). S45 carries the post-translational modification Phosphoserine. Deamidated glutamine; partial is present on Q50. A sHSP domain is found at 52 to 162; the sequence is LFRTVLDSGI…SHSERAIPVS (111 aa). K99 carries the post-translational modification N6-acetyllysine. H100 is a binding site for Zn(2+). N101 bears the Deamidated asparagine; partial mark. The Zn(2+) site is built by E102 and H107. S122 carries the phosphoserine modification. N123 carries the post-translational modification Deamidated asparagine; partial. C131 and C142 form a disulfide bridge. At Q147 the chain carries Deamidated glutamine; partial. A disordered region spans residues 147-173; that stretch reads QSGMDASHSERAIPVSREEKPSSAPSS. Residues 153–167 show a composition bias toward basic and acidic residues; that stretch reads SHSERAIPVSREEKP. Position 154 (H154) interacts with Zn(2+). O-linked (GlcNAc) serine glycosylation occurs at S162.

The protein belongs to the small heat shock protein (HSP20) family. In terms of assembly, heteromer composed of three CRYAA and one CRYAB subunits. Inter-subunit bridging via zinc ions enhances stability, which is crucial as there is no protein turn over in the lens. Can also form homodimers and homotetramers (dimers of dimers) which serve as the building blocks of homooligomers. Within homooligomers, the zinc-binding motif is created from residues of 3 different molecules. His-100 and Glu-102 from one molecule are ligands of the zinc ion, and His-107 and His-154 residues from additional molecules complete the site with tetrahedral coordination geometry. Part of a complex required for lens intermediate filament formation composed of BFSP1, BFSP2 and CRYAA. In terms of processing, undergoes age-dependent proteolytical cleavage at the C-terminus.

It is found in the cytoplasm. It localises to the nucleus. In terms of biological role, contributes to the transparency and refractive index of the lens. In its oxidized form (absence of intramolecular disulfide bond), acts as a chaperone, preventing aggregation of various proteins under a wide range of stress conditions. Required for the correct formation of lens intermediate filaments as part of a complex composed of BFSP1, BFSP2 and CRYAA. This is Alpha-crystallin A chain (CRYAA) from Procavia capensis (Rock hyrax).